The chain runs to 68 residues: ATP synthase F(0) complex subunit 8 (68 aa).

A helical membrane pass occupies residues 8–24 (VWPTIITSMLLTLFLLM). An N6-acetyllysine; alternate modification is found at Lys54. Lys54 bears the N6-succinyllysine; alternate mark. An N6-acetyllysine modification is found at Lys57.

Belongs to the ATPase protein 8 family. In terms of assembly, component of the ATP synthase complex composed at least of ATP5F1A/subunit alpha, ATP5F1B/subunit beta, ATP5MC1/subunit c (homooctomer), MT-ATP6/subunit a, MT-ATP8/subunit 8, ATP5ME/subunit e, ATP5MF/subunit f, ATP5MG/subunit g, ATP5MK/subunit k, ATP5MJ/subunit j, ATP5F1C/subunit gamma, ATP5F1D/subunit delta, ATP5F1E/subunit epsilon, ATP5PF/subunit F6, ATP5PB/subunit b, ATP5PD/subunit d, ATP5PO/subunit OSCP. ATP synthase complex consists of a soluble F(1) head domain (subunits alpha(3) and beta(3)) - the catalytic core - and a membrane F(0) domain - the membrane proton channel (subunits c, a, 8, e, f, g, k and j). These two domains are linked by a central stalk (subunits gamma, delta, and epsilon) rotating inside the F1 region and a stationary peripheral stalk (subunits F6, b, d, and OSCP). Interacts with PRICKLE3.

Its subcellular location is the mitochondrion membrane. Its function is as follows. Subunit 8, of the mitochondrial membrane ATP synthase complex (F(1)F(0) ATP synthase or Complex V) that produces ATP from ADP in the presence of a proton gradient across the membrane which is generated by electron transport complexes of the respiratory chain. ATP synthase complex consist of a soluble F(1) head domain - the catalytic core - and a membrane F(1) domain - the membrane proton channel. These two domains are linked by a central stalk rotating inside the F(1) region and a stationary peripheral stalk. During catalysis, ATP synthesis in the catalytic domain of F(1) is coupled via a rotary mechanism of the central stalk subunits to proton translocation. In vivo, can only synthesize ATP although its ATP hydrolase activity can be activated artificially in vitro. Part of the complex F(0) domain. This is ATP synthase F(0) complex subunit 8 from Symphalangus syndactylus (Siamang).